The following is a 179-amino-acid chain: Large ribosomal subunit protein bL9 (179 aa).

The segment at 156–179 is disordered; that stretch reads PEGAPVPVAEEPAAEAEQAEVAAE. The segment covering 157–166 has biased composition (low complexity); the sequence is EGAPVPVAEE. A compositionally biased stretch (acidic residues) spans 167–179; sequence PAAEAEQAEVAAE.

Belongs to the bacterial ribosomal protein bL9 family.

Its function is as follows. Binds to the 23S rRNA. This is Large ribosomal subunit protein bL9 from Porphyromonas gingivalis (strain ATCC 33277 / DSM 20709 / CIP 103683 / JCM 12257 / NCTC 11834 / 2561).